Here is a 692-residue protein sequence, read N- to C-terminus: MKREFSLENTRNIGIMAHIDAGKTTTTERILYYTGKIHKIGETHEGASQMDWMEQEQERGITITSAATTAQWAGHRVNIIDTPGHVDFTVEVERSLRVLDGAVTVLDAQSGVEPQTETVWRQATTYGVPRIVFINKMDKTGADFLYSVGTLHDRLQANAHPIQLPIGAEDQFSAIIDLVEMKATFYGDEKGTAVTEGEIPEEYRAQAEEYREKLIDAVASVDEDIMEKYLEGEEITVAELKAAIRRATIAVEFYPVICGTAFKHKGVRPMLNAVIDYLPSPVDVPAIKGTSVDGDEELERKSSDDEPFSALAFKVMTDPFVGKLTFFRVYSGTLDSGSYVQNSSKGKRERVGRILQMHANSREEISKVFAGDIAAAVGLKDTTTGDTLCDEKNLVILESMEFPEPVISLSVEPKSKADQDKMGQALQKLQEEDPTFRAHTDTETGQTIISGMGELHLDILVDRMRREFKVEANVGAPMVSYRETFRSSAKVQGKFTRQSGGRGQYGDVTIEFSPNEEGKGFEFENAIVGGVIPREYIPAVEAGLRDSLDRGVVAGYPLIDIKAKLVFGSYHDVDSNEMAFKIAASMALKEASKQCDAVILEPMMKVEVVIPEEYLGDIMGNITSRRGRVEGMDARGNSQVVRAMVPLAEMFGYATTLRSATQGRGVFSMTFDHYEEVPKSIAAEIIKKNKGE.

A tr-type G domain is found at E8–V282. GTP is bound by residues A17–T24, D81–H85, and N135–D138.

This sequence belongs to the TRAFAC class translation factor GTPase superfamily. Classic translation factor GTPase family. EF-G/EF-2 subfamily.

Its subcellular location is the cytoplasm. In terms of biological role, catalyzes the GTP-dependent ribosomal translocation step during translation elongation. During this step, the ribosome changes from the pre-translocational (PRE) to the post-translocational (POST) state as the newly formed A-site-bound peptidyl-tRNA and P-site-bound deacylated tRNA move to the P and E sites, respectively. Catalyzes the coordinated movement of the two tRNA molecules, the mRNA and conformational changes in the ribosome. The sequence is that of Elongation factor G from Lysinibacillus sphaericus (strain C3-41).